Consider the following 211-residue polypeptide: ATP phosphoribosyltransferase (211 aa).

This sequence belongs to the ATP phosphoribosyltransferase family. Short subfamily. Heteromultimer composed of HisG and HisZ subunits.

Its subcellular location is the cytoplasm. The catalysed reaction is 1-(5-phospho-beta-D-ribosyl)-ATP + diphosphate = 5-phospho-alpha-D-ribose 1-diphosphate + ATP. Its pathway is amino-acid biosynthesis; L-histidine biosynthesis; L-histidine from 5-phospho-alpha-D-ribose 1-diphosphate: step 1/9. In terms of biological role, catalyzes the condensation of ATP and 5-phosphoribose 1-diphosphate to form N'-(5'-phosphoribosyl)-ATP (PR-ATP). Has a crucial role in the pathway because the rate of histidine biosynthesis seems to be controlled primarily by regulation of HisG enzymatic activity. This Pseudomonas paraeruginosa (strain DSM 24068 / PA7) (Pseudomonas aeruginosa (strain PA7)) protein is ATP phosphoribosyltransferase.